The chain runs to 503 residues: Na(+)-translocating NADH-quinone reductase subunit B (503 aa).

Transmembrane regions (helical) follow at residues 55–75, 120–142, and 160–180; these read MMLVVIALMPTIFAAVWNSGL, IFLPLLFISYAVGGTCEVLFAII, and LILPPTIPYWMAALGIAFGVV. Position 248 is an FMN phosphoryl threonine (Thr248). The next 5 membrane-spanning stretches (helical) occupy residues 361-381, 384-404, 417-437, 452-472, and 475-495; these read TSTVACLLGAGLLLLTGIASW, MLSFGLSAFFFAWFFKIMSIL, FFIPAYRHLCIGGLAFGLVFM, WLYGAFIGFLTILIRLINPAY, and GVMLAILLGNVFAPLFDNIAL.

This sequence belongs to the NqrB/RnfD family. As to quaternary structure, composed of six subunits; NqrA, NqrB, NqrC, NqrD, NqrE and NqrF. FMN is required as a cofactor.

It is found in the cell inner membrane. The catalysed reaction is a ubiquinone + n Na(+)(in) + NADH + H(+) = a ubiquinol + n Na(+)(out) + NAD(+). In terms of biological role, NQR complex catalyzes the reduction of ubiquinone-1 to ubiquinol by two successive reactions, coupled with the transport of Na(+) ions from the cytoplasm to the periplasm. NqrA to NqrE are probably involved in the second step, the conversion of ubisemiquinone to ubiquinol. In Chlamydia trachomatis serovar A (strain ATCC VR-571B / DSM 19440 / HAR-13), this protein is Na(+)-translocating NADH-quinone reductase subunit B.